A 232-amino-acid polypeptide reads, in one-letter code: Fibrillarin-like rRNA/tRNA 2'-O-methyltransferase (232 aa).

S-adenosyl-L-methionine is bound by residues 87 to 88, 105 to 106, 130 to 131, and 150 to 153; these read TT, EF, DA, and DVAQ.

This sequence belongs to the methyltransferase superfamily. Fibrillarin family. Interacts with nop5. Component of box C/D small ribonucleoprotein (sRNP) particles that contain rpl7ae, FlpA and nop5, plus a guide RNA.

In terms of biological role, involved in pre-rRNA and tRNA processing. Utilizes the methyl donor S-adenosyl-L-methionine to catalyze the site-specific 2'-hydroxyl methylation of ribose moieties in rRNA and tRNA. Site specificity is provided by a guide RNA that base pairs with the substrate. Methylation occurs at a characteristic distance from the sequence involved in base pairing with the guide RNA. The polypeptide is Fibrillarin-like rRNA/tRNA 2'-O-methyltransferase (Methanococcus maripaludis (strain C7 / ATCC BAA-1331)).